We begin with the raw amino-acid sequence, 556 residues long: MDKRHDPSRRIIAPHGSQLSCKSWLTEAPMRMLMNNLHPDVAERPEDLVVYGGIGRAARDWDCYDKIIEVLKRLEDDETLMVQSGKPVGVFRTHADAPRVLIANSNLVPHWANWEHFNELDKQGLAMYGQMTAGSWIYIGTQGIVQGTYETFVAVAKQHFGGVAAGKWILTGGLGGMGGAQTLAGTMAGFSVLACEVDETRIDFRLRTRYVDKKATSLDEALAMINDANASGKPVSVGLLANAADVFAELVKRGITPDVVTDQTSAHDPLNGYLPQGWTMAQAADMRKTDEAAVVKAAKASMAVQVQAMLDLQAAGAATLDYGNNIRQMAFETGVKNAFDFPGFVPAYIRPLFCEGIGPFRWVALSGDPEDIYKTDAKVKELIPDNPHLHNWLDMARERIAFQGLPARICWVGLKDRARLAQAFNEMVKNGELSAPIVIGRDHLDSGSVASPNRETESMMDGSDAVSDWPLLNALLNTASGATWVSLHHGGGVGMGFSQHSGVVIVCDGTEAAAKRVGRVLWNDPATGVMRHADAGYEIAKNCAKEQGLDLPMLKD.

NAD(+) contacts are provided by residues 52–53 (GG), glutamine 130, 176–178 (GMG), glutamate 196, arginine 201, 242–243 (NA), 263–267 (QTSAH), 273–274 (YL), and tyrosine 322. Cysteine 410 is a catalytic residue. NAD(+) is bound at residue glycine 492.

This sequence belongs to the urocanase family. The cofactor is NAD(+).

The protein localises to the cytoplasm. The enzyme catalyses 4-imidazolone-5-propanoate = trans-urocanate + H2O. It participates in amino-acid degradation; L-histidine degradation into L-glutamate; N-formimidoyl-L-glutamate from L-histidine: step 2/3. In terms of biological role, catalyzes the conversion of urocanate to 4-imidazolone-5-propionate. This chain is Urocanate hydratase, found in Shewanella sp. (strain MR-7).